The following is a 106-amino-acid chain: SH3 domain-binding glutamic acid-rich-like protein 2-A (106 aa).

Residues 61–67 carry the SH3-binding motif; it reads QGNPLPP.

It belongs to the SH3BGR family.

The protein localises to the nucleus. The protein is SH3 domain-binding glutamic acid-rich-like protein 2-A (sh3bgrl2-a) of Xenopus laevis (African clawed frog).